The following is a 309-amino-acid chain: 2-phospho-L-lactate transferase (309 aa).

Residues D50 and K89 each coordinate 7,8-didemethyl-8-hydroxy-5-deazariboflavin.

Belongs to the CofD family. In terms of assembly, homodimer. It depends on Mg(2+) as a cofactor.

The enzyme catalyses (2S)-lactyl-2-diphospho-5'-guanosine + 7,8-didemethyl-8-hydroxy-5-deazariboflavin = oxidized coenzyme F420-0 + GMP + H(+). The protein operates within cofactor biosynthesis; coenzyme F420 biosynthesis. In terms of biological role, catalyzes the transfer of the 2-phospholactate moiety from (2S)-lactyl-2-diphospho-5'-guanosine to 7,8-didemethyl-8-hydroxy-5-deazariboflavin (FO) with the formation of oxidized coenzyme F420-0 and GMP. The chain is 2-phospho-L-lactate transferase from Methanococcus maripaludis (strain C5 / ATCC BAA-1333).